The primary structure comprises 547 residues: Probable bifunctional tRNA threonylcarbamoyladenosine biosynthesis protein (547 aa).

Residues 1 to 329 (MKNTFILGIE…FRTDDVNVTW (329 aa)) are kae1. Residues His113, His117, and Tyr134 each coordinate Fe cation. L-threonylcarbamoyladenylate contacts are provided by residues 134–138 (YVSGA), Asp166, Gly179, Glu183, and Asn262. Asp290 serves as a coordination point for Fe cation. One can recognise a Protein kinase domain in the interval 340-547 (EISPEAFLRA…EEIKKRARYA (208 aa)). ATP-binding positions include 355–363 (LDNGAEAVI) and Lys377. Asp464 serves as the catalytic Proton acceptor; for kinase activity.

This sequence in the N-terminal section; belongs to the KAE1 / TsaD family. In the C-terminal section; belongs to the protein kinase superfamily. Tyr protein kinase family. BUD32 subfamily. Component of the KEOPS complex that consists of Kae1, Bud32, Cgi121 and Pcc1; the whole complex dimerizes. Fe(2+) serves as cofactor.

Its subcellular location is the cytoplasm. The enzyme catalyses L-seryl-[protein] + ATP = O-phospho-L-seryl-[protein] + ADP + H(+). The catalysed reaction is L-threonyl-[protein] + ATP = O-phospho-L-threonyl-[protein] + ADP + H(+). It carries out the reaction L-threonylcarbamoyladenylate + adenosine(37) in tRNA = N(6)-L-threonylcarbamoyladenosine(37) in tRNA + AMP + H(+). Required for the formation of a threonylcarbamoyl group on adenosine at position 37 (t(6)A37) in tRNAs that read codons beginning with adenine. Is a component of the KEOPS complex that is probably involved in the transfer of the threonylcarbamoyl moiety of threonylcarbamoyl-AMP (TC-AMP) to the N6 group of A37. The Kae1 domain likely plays a direct catalytic role in this reaction. The Bud32 domain probably displays kinase activity that regulates Kae1 function. The chain is Probable bifunctional tRNA threonylcarbamoyladenosine biosynthesis protein from Methanosarcina acetivorans (strain ATCC 35395 / DSM 2834 / JCM 12185 / C2A).